The chain runs to 380 residues: UPF0754 membrane protein Bsph_0374 (380 aa).

The next 2 membrane-spanning stretches (helical) occupy residues 1–21 and 357–377; these read MDNFIVTLLFMAIIGAAIGGV and MITVLGAVLGGLIGIVQGLIV.

The protein belongs to the UPF0754 family.

The protein localises to the cell membrane. In Lysinibacillus sphaericus (strain C3-41), this protein is UPF0754 membrane protein Bsph_0374.